A 141-amino-acid chain; its full sequence is Hemoglobin subunit alpha-1/2 (141 aa).

Positions 1 to 141 constitute a Globin domain; it reads VLSPADKANV…VGTVLTSKYR (141 aa). S3 is subject to Phosphoserine. K7 and K11 each carry N6-succinyllysine. K16 carries the post-translational modification N6-acetyllysine; alternate. Position 16 is an N6-succinyllysine; alternate (K16). Position 24 is a phosphotyrosine (Y24). S35 bears the Phosphoserine mark. K40 bears the N6-succinyllysine mark. S49 carries the phosphoserine modification. O2 is bound at residue H58. Heme b is bound at residue H87. The residue at position 102 (S102) is a Phosphoserine. Position 108 is a phosphothreonine (T108). A phosphoserine mark is found at S124 and S131. T134 and T137 each carry phosphothreonine. S138 carries the post-translational modification Phosphoserine.

It belongs to the globin family. As to quaternary structure, heterotetramer of two alpha chains and two beta chains. As to expression, red blood cells.

Its function is as follows. Involved in oxygen transport from the lung to the various peripheral tissues. The protein is Hemoglobin subunit alpha-1/2 of Macroderma gigas (Australian ghost bat).